We begin with the raw amino-acid sequence, 126 residues long: Fluoride-specific ion channel FluC (126 aa).

The next 4 membrane-spanning stretches (helical) occupy residues 4-24 (PLLSIALGSVLGAWLRWFLGL), 33-53 (IPLGTVTVNLVGGFIIGFAMA), 67-87 (FVITGFCGALTTFSTFSIEIV), and 97-117 (MAMLAISIHLIGSLIFTCLGL). Positions 74 and 77 each coordinate Na(+).

The protein belongs to the fluoride channel Fluc/FEX (TC 1.A.43) family.

Its subcellular location is the cell inner membrane. The catalysed reaction is fluoride(in) = fluoride(out). Na(+) is not transported, but it plays an essential structural role and its presence is essential for fluoride channel function. In terms of biological role, fluoride-specific ion channel. Important for reducing fluoride concentration in the cell, thus reducing its toxicity. The sequence is that of Fluoride-specific ion channel FluC from Acinetobacter baumannii (strain AB307-0294).